A 326-amino-acid chain; its full sequence is Cinnamoyl-CoA reductase CAD2 (326 aa).

NADP(+)-binding positions include 14–20 (GASGYIA), R39, K46, 66–67 (NL), and 86–88 (TAS). Positions 130, 136, 141, and 165 each coordinate (E)-coniferaldehyde. NADP(+) is bound by residues Y165, K169, 192 to 195 (PAMV), and S207. K169 serves as the catalytic Proton donor. Residues M194, S207, F226, V257, and Y290 each coordinate (E)-coniferaldehyde.

This sequence belongs to the NAD(P)-dependent epimerase/dehydratase family. Dihydroflavonol-4-reductase subfamily.

Its subcellular location is the cytoplasm. The catalysed reaction is (E)-cinnamaldehyde + NADP(+) + CoA = (E)-cinnamoyl-CoA + NADPH + H(+). The enzyme catalyses (E)-coniferaldehyde + NADP(+) + CoA = (E)-feruloyl-CoA + NADPH + H(+). It carries out the reaction (E)-4-coumaraldehyde + NADP(+) + CoA = (E)-4-coumaroyl-CoA + NADPH + H(+). It functions in the pathway aromatic compound metabolism; phenylpropanoid biosynthesis. Involved in lignin biosynthesis. Regulates the monolignol composition by catalyzing the conversion of cinnamoyl-CoAs into their corresponding cinnamaldehydes. Can use coumaraldehyde and coniferaldehyde as substrates, but barely sinapaldehyde. The polypeptide is Cinnamoyl-CoA reductase CAD2 (Medicago truncatula (Barrel medic)).